Reading from the N-terminus, the 419-residue chain is Serine hydroxymethyltransferase (419 aa).

Residues Leu-121 and 125–127 (GHL) each bind (6S)-5,6,7,8-tetrahydrofolate. At Lys-230 the chain carries N6-(pyridoxal phosphate)lysine. Position 355-357 (355-357 (SPF)) interacts with (6S)-5,6,7,8-tetrahydrofolate.

Belongs to the SHMT family. In terms of assembly, homodimer. It depends on pyridoxal 5'-phosphate as a cofactor.

The protein localises to the cytoplasm. The enzyme catalyses (6R)-5,10-methylene-5,6,7,8-tetrahydrofolate + glycine + H2O = (6S)-5,6,7,8-tetrahydrofolate + L-serine. Its pathway is one-carbon metabolism; tetrahydrofolate interconversion. It participates in amino-acid biosynthesis; glycine biosynthesis; glycine from L-serine: step 1/1. Its function is as follows. Catalyzes the reversible interconversion of serine and glycine with tetrahydrofolate (THF) serving as the one-carbon carrier. This reaction serves as the major source of one-carbon groups required for the biosynthesis of purines, thymidylate, methionine, and other important biomolecules. Also exhibits THF-independent aldolase activity toward beta-hydroxyamino acids, producing glycine and aldehydes, via a retro-aldol mechanism. The protein is Serine hydroxymethyltransferase of Streptococcus uberis (strain ATCC BAA-854 / 0140J).